The chain runs to 205 residues: GTP cyclohydrolase-2 (205 aa).

Residue 49–53 (RIHSE) participates in GTP binding. 3 residues coordinate Zn(2+): Cys54, Cys65, and Cys67. Residues Gln70, 92–94 (EGR), and Thr114 each bind GTP. The active-site Proton acceptor is the Asp126. The active-site Nucleophile is Arg128. Positions 149 and 154 each coordinate GTP.

The protein belongs to the GTP cyclohydrolase II family. Zn(2+) is required as a cofactor.

The catalysed reaction is GTP + 4 H2O = 2,5-diamino-6-hydroxy-4-(5-phosphoribosylamino)-pyrimidine + formate + 2 phosphate + 3 H(+). The protein operates within cofactor biosynthesis; riboflavin biosynthesis; 5-amino-6-(D-ribitylamino)uracil from GTP: step 1/4. Functionally, catalyzes the conversion of GTP to 2,5-diamino-6-ribosylamino-4(3H)-pyrimidinone 5'-phosphate (DARP), formate and pyrophosphate. The protein is GTP cyclohydrolase-2 of Shewanella piezotolerans (strain WP3 / JCM 13877).